The following is a 343-amino-acid chain: Multidrug resistance protein MdtN (343 aa).

The Cytoplasmic portion of the chain corresponds to 1 to 12; the sequence is MESTPKKAPRSK. The helical; Signal-anchor for type II membrane protein transmembrane segment at 13 to 33 threads the bilayer; it reads FPALLVVALALVALVFVIWRV. Over 34 to 343 the chain is Periplasmic; it reads DSAPSTNDAY…ASAVANLEPQ (310 aa).

It belongs to the membrane fusion protein (MFP) (TC 8.A.1) family. Could be part of a tripartite efflux system composed of MdtN, MdtO and MdtP.

It localises to the cell inner membrane. In terms of biological role, could be involved in resistance to puromycin, acriflavine and tetraphenylarsonium chloride. This is Multidrug resistance protein MdtN (mdtN) from Escherichia coli O6:H1 (strain CFT073 / ATCC 700928 / UPEC).